The chain runs to 327 residues: Gibberellin 2-beta-dioxygenase 1 (327 aa).

The 106-residue stretch at 171–276 folds into the Fe2OG dioxygenase domain; sequence QSDCLFRVNH…RLSMIYFCGP (106 aa). Fe cation-binding residues include H200, D202, and H257. Residue R267 is part of the active site.

Belongs to the iron/ascorbate-dependent oxidoreductase family. GA2OX subfamily. The cofactor is Fe cation. In terms of tissue distribution, predominantly expressed in roots, flowers, young fruits and seeds.

It catalyses the reaction gibberellin A1 + 2-oxoglutarate + O2 = gibberellin A8 + succinate + CO2. It participates in plant hormone biosynthesis; gibberellin biosynthesis. Its function is as follows. Catalyzes the 2-beta-hydroxylation of several biologically active gibberellins, leading to the homeostatic regulation of their endogenous level. Catabolism of gibberellins (GAs) plays a central role in plant development. Converts GA9/GA20 to GA51/GA29 and GA4/GA1 to GA34/GA8. This Pisum sativum (Garden pea) protein is Gibberellin 2-beta-dioxygenase 1 (GA2OX1).